Reading from the N-terminus, the 51-residue chain is Insulin (51 aa).

3 disulfides stabilise this stretch: Cys-7-Cys-37, Cys-19-Cys-50, and Cys-36-Cys-41.

This sequence belongs to the insulin family. In terms of assembly, heterodimer of a B chain and an A chain linked by two disulfide bonds.

It is found in the secreted. Its function is as follows. Insulin decreases blood glucose concentration. It increases cell permeability to monosaccharides, amino acids and fatty acids. It accelerates glycolysis, the pentose phosphate cycle, and glycogen synthesis in liver. This Capra hircus (Goat) protein is Insulin (INS).